The sequence spans 174 residues: Ribosome maturation factor RimM (174 aa).

Residues 98-171 (EDEFYFHEII…KIKIHVMEGL (74 aa)) enclose the PRC barrel domain.

Belongs to the RimM family. As to quaternary structure, binds ribosomal protein uS19.

Its subcellular location is the cytoplasm. Its function is as follows. An accessory protein needed during the final step in the assembly of 30S ribosomal subunit, possibly for assembly of the head region. Essential for efficient processing of 16S rRNA. May be needed both before and after RbfA during the maturation of 16S rRNA. It has affinity for free ribosomal 30S subunits but not for 70S ribosomes. In Bacillus velezensis (strain DSM 23117 / BGSC 10A6 / LMG 26770 / FZB42) (Bacillus amyloliquefaciens subsp. plantarum), this protein is Ribosome maturation factor RimM.